The sequence spans 433 residues: Enolase (433 aa).

Ser-1 bears the N-acetylserine mark. (2R)-2-phosphoglycerate is bound by residues Ser-36 and His-157. Residue Glu-209 is the Proton donor of the active site. Mn(2+) is bound by residues Asp-244, Glu-294, and Asp-319. The (2R)-2-phosphoglycerate site is built by Lys-344, Arg-373, and Ser-374. The active-site Proton acceptor is Lys-344.

It belongs to the enolase family. As to quaternary structure, homodimer. Mg(2+) is required as a cofactor.

The protein resides in the cytoplasm. It catalyses the reaction (2R)-2-phosphoglycerate = phosphoenolpyruvate + H2O. It participates in carbohydrate degradation; glycolysis; pyruvate from D-glyceraldehyde 3-phosphate: step 4/5. Its activity is regulated as follows. Inhibited by 2-phosphoglycolic acid. The protein is Enolase of Homarus gammarus (European lobster).